Reading from the N-terminus, the 572-residue chain is Probable cysteine--tRNA ligase, mitochondrial (572 aa).

Residue Cys-81 participates in Zn(2+) binding. Residue Gly-82 participates in L-cysteine binding. The 'HIGH' region signature appears at 83 to 93 (PTVYDHAHLGH). Thr-122 contacts L-cysteine. Positions 127 to 130 (KIIK) match the 'KIIK' region motif. Cys-260, His-285, and Glu-289 together coordinate Zn(2+). His-285 contacts L-cysteine. The 'KMSKS' region motif lies at 320–324 (KMSKS). Lys-323 is a binding site for ATP.

It belongs to the class-I aminoacyl-tRNA synthetase family. It depends on Zn(2+) as a cofactor.

The protein localises to the mitochondrion. It catalyses the reaction tRNA(Cys) + L-cysteine + ATP = L-cysteinyl-tRNA(Cys) + AMP + diphosphate. It carries out the reaction 2 L-cysteine = S-sulfanyl-L-cysteine + L-alanine. The enzyme catalyses S-sulfanyl-L-cysteine + L-cysteine = S-disulfanyl-L-cysteine + L-alanine. The catalysed reaction is S-sulfanyl-L-cysteine + tRNA(Cys) + ATP = (S)-sulfanyl-L-cysteinyl-tRNA(Cys) + AMP + diphosphate. It catalyses the reaction S-disulfanyl-L-cysteine + tRNA(Cys) + ATP = (S)-disulfanyl-L-cysteinyl-tRNA(Cys) + AMP + diphosphate. Mitochondrial cysteine-specific aminoacyl-tRNA synthetase that catalyzes the ATP-dependent ligation of cysteine to tRNA(Cys). Its function is as follows. In addition to its role as an aminoacyl-tRNA synthetase, has also cysteine persulfide synthase activity. Produces reactive persulfide species such as cysteine persulfide (CysSSH) from substrate cysteine and mediate direct incorporation of CysSSH into proteins during translations, resulting in protein persulfides and polysulfides. CysSSHs behave as potent antioxidants and cellular protectants. This Xenopus tropicalis (Western clawed frog) protein is Probable cysteine--tRNA ligase, mitochondrial (cars2).